The primary structure comprises 328 residues: Nucleotide-binding protein BL0705 (328 aa).

Positions 1–35 are disordered; it reads MNQQTTNRDTGEAAATNAPANSATSTSTPDNQPTP. A compositionally biased stretch (low complexity) spans 13–29; it reads AAATNAPANSATSTSTP. Residue 46–53 coordinates ATP; the sequence is GMSGAGRS. Residue 101–104 participates in GTP binding; that stretch reads DVRS.

The protein belongs to the RapZ-like family.

Displays ATPase and GTPase activities. The sequence is that of Nucleotide-binding protein BL0705 from Bifidobacterium longum (strain NCC 2705).